A 260-amino-acid polypeptide reads, in one-letter code: Phosphatidylglycerol--prolipoprotein diacylglyceryl transferase (260 aa).

The next 4 helical transmembrane spans lie at 17–37, 52–72, 85–105, and 113–133; these read VVKW…SWIF, LTAA…LHVI, IFSG…IGLW, and FNLG…QAIG. R134 lines the a 1,2-diacyl-sn-glycero-3-phospho-(1'-sn-glycerol) pocket. Helical transmembrane passes span 170–190, 198–218, and 227–247; these read APTQ…SLFI, GQLF…IGFV, and GLEQ…PLFI.

It belongs to the Lgt family.

It is found in the cell membrane. It carries out the reaction L-cysteinyl-[prolipoprotein] + a 1,2-diacyl-sn-glycero-3-phospho-(1'-sn-glycerol) = an S-1,2-diacyl-sn-glyceryl-L-cysteinyl-[prolipoprotein] + sn-glycerol 1-phosphate + H(+). The protein operates within protein modification; lipoprotein biosynthesis (diacylglyceryl transfer). Its function is as follows. Catalyzes the transfer of the diacylglyceryl group from phosphatidylglycerol to the sulfhydryl group of the N-terminal cysteine of a prolipoprotein, the first step in the formation of mature lipoproteins. In Dehalococcoides mccartyi (strain ATCC BAA-2100 / JCM 16839 / KCTC 5957 / BAV1), this protein is Phosphatidylglycerol--prolipoprotein diacylglyceryl transferase.